A 259-amino-acid chain; its full sequence is 3-oxo-5-alpha-steroid 4-dehydrogenase 1 (259 aa).

The next 5 helical transmembrane spans lie at 10–30 (LCLLDMLVYLEGFMAFVSIVG), 86–106 (VLLAMFLIHYVQRTLVFPVLI), 111–131 (PTLLVTFVLAFLFCTFNGYVQ), 146–166 (VTHPCFLTGFALWLVGMVINI), and 206–226 (WCGFALASWSLQGVVFALFTL).

Belongs to the steroid 5-alpha reductase family. Liver and prostate (at a low level).

Its subcellular location is the microsome membrane. It is found in the endoplasmic reticulum membrane. It carries out the reaction a 3-oxo-5alpha-steroid + NADP(+) = a 3-oxo-Delta(4)-steroid + NADPH + H(+). It catalyses the reaction 5alpha-pregnane-3,20-dione + NADP(+) = progesterone + NADPH + H(+). The catalysed reaction is 17beta-hydroxy-5alpha-androstan-3-one + NADP(+) = testosterone + NADPH + H(+). The enzyme catalyses androst-4-ene-3,17-dione + NADPH + H(+) = 5alpha-androstan-3,17-dione + NADP(+). In terms of biological role, converts testosterone into 5-alpha-dihydrotestosterone and progesterone or corticosterone into their corresponding 5-alpha-3-oxosteroids. It plays a central role in sexual differentiation and androgen physiology. In Rattus norvegicus (Rat), this protein is 3-oxo-5-alpha-steroid 4-dehydrogenase 1.